Here is a 532-residue protein sequence, read N- to C-terminus: Vesicular acetylcholine transporter (532 aa).

Residues 1-33 are Cytoplasmic-facing; sequence MESAEPAGQARAAATKLSEAVGAALQEPRRQRR. Residues 34-54 traverse the membrane as a helical segment; the sequence is LVLVIVCVALLLDNMLYMVIV. Over 55–125 the chain is Lumenal, vesicle; sequence PIVPDYIAHM…PTESEDVKIG (71 aa). 2 N-linked (GlcNAc...) asparagine glycosylation sites follow: N89 and N96. The helical transmembrane segment at 126–146 threads the bilayer; that stretch reads VLFASKAILQLLVNPLSGPFI. Topologically, residues 147–152 are cytoplasmic; sequence DRMSYD. The helical transmembrane segment at 153-173 threads the bilayer; it reads VPLLIGLGVMFASTVLFAFAE. Residues 174–182 are Lumenal, vesicle-facing; the sequence is DYATLFAAR. The helical transmembrane segment at 183–203 threads the bilayer; sequence SLQGLGSAFADTSGIAMIADK. The Cytoplasmic portion of the chain corresponds to 204–213; sequence YPEEPERSRA. A helical membrane pass occupies residues 214–234; sequence LGVALAFISFGSLVAPPFGGI. At 235–242 the chain is on the lumenal, vesicle side; sequence LYEFAGKR. The helical transmembrane segment at 243–263 threads the bilayer; the sequence is VPFLVLAAVSLFDALLLLAVA. Residues 264 to 289 are Cytoplasmic-facing; that stretch reads KPFSAAARARANLPVGTPIHRLMLDP. A helical membrane pass occupies residues 290 to 310; it reads YIAVVAGALTTCNIPLAFLEP. The Lumenal, vesicle segment spans residues 311–325; that stretch reads TIATWMKHTMAASEW. The helical transmembrane segment at 326-346 threads the bilayer; it reads EMGMAWLPAFVPHVLGVYLTV. Topologically, residues 347–356 are cytoplasmic; it reads RLAARYPHLQ. A helical membrane pass occupies residues 357-377; it reads WLYGALGLAVIGASSCIVPAC. At 378–388 the chain is on the lumenal, vesicle side; that stretch reads RSFAPLVVSLC. The helical transmembrane segment at 389-409 threads the bilayer; sequence GLCFGIALVDTALLPTLAFLV. Over 410 to 422 the chain is Cytoplasmic; the sequence is DVRHVSVYGSVYA. The helical transmembrane segment at 423–443 threads the bilayer; that stretch reads IADISYSVAYALGPIVAGHIV. Residues 444–447 lie on the Lumenal, vesicle side of the membrane; the sequence is HSLG. The chain crosses the membrane as a helical span at residues 448 to 468; the sequence is FEQLSLGMGLANLLYAPVLLL. At 469 to 532 the chain is on the cytoplasmic side; the sequence is LRNVGLLTRS…DDYNYYYTRS (64 aa). A mediates interaction with SEC14L1 region spans residues 471 to 532; that stretch reads NVGLLTRSRS…DDYNYYYTRS (62 aa). The tract at residues 502–523 is disordered; that stretch reads RPVSGQDGEPRSPPGPFDACED.

The protein belongs to the major facilitator superfamily. Vesicular transporter family. In terms of assembly, interacts with SEC14L1. As to expression, peripheral and central cholinergic nervous systems.

Its subcellular location is the cytoplasmic vesicle. It is found in the secretory vesicle. The protein localises to the synaptic vesicle membrane. The catalysed reaction is acetylcholine(out) + 2 H(+)(in) = acetylcholine(in) + 2 H(+)(out). It carries out the reaction choline(in) + 2 H(+)(out) = choline(out) + 2 H(+)(in). The enzyme catalyses serotonin(in) + 2 H(+)(out) = serotonin(out) + 2 H(+)(in). With respect to regulation, potently inhibited by L-vesamicol, reserpine and tetrabenazine. Electrogenic antiporter that exchanges one cholinergic neurotransmitter, acetylcholine or choline, with two intravesicular protons across the membrane of synaptic vesicles. Uses the electrochemical proton gradient established by the V-type proton-pump ATPase to store neurotransmitters inside the vesicles prior to their release via exocytosis. Determines cholinergic vesicular quantal size at presynaptic nerve terminals in developing neuro-muscular junctions with an impact on motor neuron differentiation and innervation pattern. Part of forebrain cholinergic system, regulates hippocampal synapse transmissions that underlie spatial memory formation. Can transport serotonin. The protein is Vesicular acetylcholine transporter (SLC18A3) of Homo sapiens (Human).